A 103-amino-acid chain; its full sequence is UPF0145 protein CYA_2258 (103 aa).

It belongs to the UPF0145 family.

This Synechococcus sp. (strain JA-3-3Ab) (Cyanobacteria bacterium Yellowstone A-Prime) protein is UPF0145 protein CYA_2258.